The primary structure comprises 231 residues: PX domain-containing protein 1 (231 aa).

The 134-residue stretch at 1-134 folds into the PX domain; that stretch reads MASAVFEGTS…TFFERSPLDQ (134 aa).

The polypeptide is PX domain-containing protein 1 (PXDC1) (Homo sapiens (Human)).